The primary structure comprises 163 residues: uncharacterized protein (163 aa).

This is an uncharacterized protein from Rickettsia prowazekii (strain Madrid E).